Here is a 103-residue protein sequence, read N- to C-terminus: AAFALPAFASFEKDVITPSVLEAVLNRKAPLSNIMMENDAILNVIANVKTVISNPVLEEALLKTNHGVNGIPCGESCVWIPCLTSAVGCPCKSKVCYRNSLDN.

Positions 1–9 are cleaved as a signal peptide; sequence AAFALPAFA. Positions 10 to 69 are excised as a propeptide; it reads SFEKDVITPSVLEAVLNRKAPLSNIMMENDAILNVIANVKTVISNPVLEEALLKTNHGVN. A cross-link (cyclopeptide (Gly-Asn)) is located at residues 70–99; the sequence is GIPCGESCVWIPCLTSAVGCPCKSKVCYRN. Cystine bridges form between cysteine 73–cysteine 89, cysteine 77–cysteine 91, and cysteine 82–cysteine 96. Residues 100 to 103 constitute a propeptide that is removed on maturation; it reads SLDN.

This is a cyclic peptide.

In terms of biological role, probably participates in a plant defense mechanism. In Viola biflora (Yellow wood violet), this protein is Cyclotide vibi-K.